We begin with the raw amino-acid sequence, 128 residues long: MAHKFYRNYQPNNLIANSKVAKVAPLAGAALSMVGPNPLKKAPIPPLAYKVLATLEIELPNLGFCKLSVCMTDLMTSNGYTINHKAVPDNAPKIQSFHAGMSFLSSPRLLFIWLAINASYTKKYVPHP.

This is an uncharacterized protein from Saccharomyces cerevisiae (strain ATCC 204508 / S288c) (Baker's yeast).